A 185-amino-acid polypeptide reads, in one-letter code: uncharacterized protein (185 aa).

This is an uncharacterized protein from Escherichia coli (strain K12).